The primary structure comprises 249 residues: Putative SAP domain-containing protein 049L (249 aa).

Basic and acidic residues-rich tracts occupy residues 1-12, 22-38, and 95-107; these read MAAPKAEGEDKP, PKPETKEVKKPKSKEFC, and KKAESSDDKKLDE. The disordered stretch occupies residues 1 to 110; that stretch reads MAAPKAEGED…DDKKLDEATG (110 aa). Residues 119–153 enclose the SAP domain; sequence LSKLTIQTLKGMCKTRNLKISGNKAALVQRLIEAD.

The protein is Putative SAP domain-containing protein 049L of Frog virus 3 (isolate Goorha) (FV-3).